The following is a 264-amino-acid chain: 3-methyl-2-oxobutanoate hydroxymethyltransferase (264 aa).

Mg(2+) contacts are provided by aspartate 45 and aspartate 84. Residues 45–46 (DS), aspartate 84, and lysine 112 contribute to the 3-methyl-2-oxobutanoate site. Glutamate 114 lines the Mg(2+) pocket. Glutamate 181 (proton acceptor) is an active-site residue.

Belongs to the PanB family. In terms of assembly, homodecamer; pentamer of dimers. Mg(2+) serves as cofactor.

It is found in the cytoplasm. The enzyme catalyses 3-methyl-2-oxobutanoate + (6R)-5,10-methylene-5,6,7,8-tetrahydrofolate + H2O = 2-dehydropantoate + (6S)-5,6,7,8-tetrahydrofolate. The protein operates within cofactor biosynthesis; (R)-pantothenate biosynthesis; (R)-pantoate from 3-methyl-2-oxobutanoate: step 1/2. Its function is as follows. Catalyzes the reversible reaction in which hydroxymethyl group from 5,10-methylenetetrahydrofolate is transferred onto alpha-ketoisovalerate to form ketopantoate. The chain is 3-methyl-2-oxobutanoate hydroxymethyltransferase from Aeromonas salmonicida (strain A449).